A 123-amino-acid polypeptide reads, in one-letter code: Large ribosomal subunit protein uL14 (123 aa).

Belongs to the universal ribosomal protein uL14 family. In terms of assembly, part of the 50S ribosomal subunit. Forms a cluster with proteins L3 and L19. In the 70S ribosome, L14 and L19 interact and together make contacts with the 16S rRNA in bridges B5 and B8.

Functionally, binds to 23S rRNA. Forms part of two intersubunit bridges in the 70S ribosome. The chain is Large ribosomal subunit protein uL14 from Serratia proteamaculans (strain 568).